The sequence spans 176 residues: Disulfide bond formation protein B (176 aa).

Residues 1-14 lie on the Cytoplasmic side of the membrane; the sequence is MLRFLNQCSRGRGA. The helical transmembrane segment at 15–31 threads the bilayer; sequence WLLMAFTALALEMVALW. Topologically, residues 32–49 are periplasmic; that stretch reads FQHVMLLKPCVLCIYERC. C41 and C44 are oxidised to a cystine. Residues 50-65 form a helical membrane-spanning segment; the sequence is ALFGVMGAGLVGAIAP. Over 66–71 the chain is Cytoplasmic; the sequence is KTPLRY. Residues 72 to 89 traverse the membrane as a helical segment; that stretch reads VAMVIWIYSAWRGLQLAY. Residues 90 to 144 are Periplasmic-facing; the sequence is EHTMIQLHPSPFMTCDFMARFPDWLPLGKWLPQVFVASGDCAERQWSFLTLEMPQ. A disulfide bridge connects residues C104 and C130. A helical membrane pass occupies residues 145–163; that stretch reads WLLGIFAAYLVVAIAVVIA. The Cytoplasmic segment spans residues 164-176; that stretch reads QAFKPKKRDLFGR.

The protein belongs to the DsbB family.

The protein localises to the cell inner membrane. In terms of biological role, required for disulfide bond formation in some periplasmic proteins. Acts by oxidizing the DsbA protein. In Salmonella paratyphi A (strain ATCC 9150 / SARB42), this protein is Disulfide bond formation protein B.